Reading from the N-terminus, the 317-residue chain is Methionyl-tRNA formyltransferase (317 aa).

111 to 114 lines the (6S)-5,6,7,8-tetrahydrofolate pocket; that stretch reads SLLP.

The protein belongs to the Fmt family.

It carries out the reaction L-methionyl-tRNA(fMet) + (6R)-10-formyltetrahydrofolate = N-formyl-L-methionyl-tRNA(fMet) + (6S)-5,6,7,8-tetrahydrofolate + H(+). Functionally, attaches a formyl group to the free amino group of methionyl-tRNA(fMet). The formyl group appears to play a dual role in the initiator identity of N-formylmethionyl-tRNA by promoting its recognition by IF2 and preventing the misappropriation of this tRNA by the elongation apparatus. The chain is Methionyl-tRNA formyltransferase from Chlorobium phaeobacteroides (strain BS1).